A 497-amino-acid polypeptide reads, in one-letter code: Glycerol kinase (497 aa).

Thr11 serves as a coordination point for ADP. ATP-binding residues include Thr11, Ser12, and Ser13. A sn-glycerol 3-phosphate-binding site is contributed by Thr11. Position 15 (Arg15) interacts with ADP. Residues Arg81, Glu82, Tyr133, and Asp242 each contribute to the sn-glycerol 3-phosphate site. The glycerol site is built by Arg81, Glu82, Tyr133, Asp242, and Gln243. Thr264 and Gly307 together coordinate ADP. Residues Thr264, Gly307, Gln311, and Gly412 each contribute to the ATP site. 2 residues coordinate ADP: Gly412 and Asn416.

This sequence belongs to the FGGY kinase family.

The catalysed reaction is glycerol + ATP = sn-glycerol 3-phosphate + ADP + H(+). The protein operates within polyol metabolism; glycerol degradation via glycerol kinase pathway; sn-glycerol 3-phosphate from glycerol: step 1/1. Its activity is regulated as follows. Inhibited by fructose 1,6-bisphosphate (FBP). In terms of biological role, key enzyme in the regulation of glycerol uptake and metabolism. Catalyzes the phosphorylation of glycerol to yield sn-glycerol 3-phosphate. The protein is Glycerol kinase of Variovorax paradoxus (strain S110).